The following is a 130-amino-acid chain: Ribosome-binding factor A (130 aa).

This sequence belongs to the RbfA family. As to quaternary structure, monomer. Binds 30S ribosomal subunits, but not 50S ribosomal subunits or 70S ribosomes.

It localises to the cytoplasm. In terms of biological role, one of several proteins that assist in the late maturation steps of the functional core of the 30S ribosomal subunit. Associates with free 30S ribosomal subunits (but not with 30S subunits that are part of 70S ribosomes or polysomes). Required for efficient processing of 16S rRNA. May interact with the 5'-terminal helix region of 16S rRNA. The sequence is that of Ribosome-binding factor A from Alkalilimnicola ehrlichii (strain ATCC BAA-1101 / DSM 17681 / MLHE-1).